Consider the following 107-residue polypeptide: RNA polymerase II transcriptional coactivator KIWI (107 aa).

Residues 1–40 (MSSRGKRKDEDVRASDDESETHAPAKKVAKPADDSDQSDD) are disordered. Residues 7 to 23 (RKDEDVRASDDESETHA) show a composition bias toward basic and acidic residues.

The protein belongs to the transcriptional coactivator PC4 family.

Its subcellular location is the nucleus. Functionally, general coactivator that functions cooperatively with TAFs and mediates functional interactions between upstream activators and the general transcriptional machinery. Binds single-stranded DNA. This is RNA polymerase II transcriptional coactivator KIWI (KIWI) from Arabidopsis thaliana (Mouse-ear cress).